Reading from the N-terminus, the 247-residue chain is Mannose-P-dolichol utilization defect 1 protein (247 aa).

Ala-2 bears the N-acetylalanine mark. Positions 39–105 (KILLSKGLGL…NNFPFSSWGE (67 aa)) constitute a PQ-loop 1 domain. Transmembrane regions (helical) follow at residues 46 to 66 (LGLG…FKIL), 74 to 94 (LSLQ…IYSI), 103 to 123 (WGEA…VLHY), 128 to 145 (VKGV…LALL), 151 to 171 (LAVV…GKLL), 185 to 205 (LSAI…FTSV), and 213 to 233 (MAGV…QVLF). Residues 159 to 216 (ASNVPAVVVGKLLQAATNYHNGHTGQLSAITVFMLFGGSLARIFTSVQETGDPLMAGV) enclose the PQ-loop 2 domain.

Belongs to the MPDU1 (TC 2.A.43.3) family.

Its subcellular location is the membrane. Its function is as follows. Required for normal utilization of mannose-dolichol phosphate (Dol-P-Man) in the synthesis of N-linked and O-linked oligosaccharides and GPI anchors. The protein is Mannose-P-dolichol utilization defect 1 protein (MPDU1) of Cricetulus griseus (Chinese hamster).